Reading from the N-terminus, the 316-residue chain is Pantothenate kinase (316 aa).

95 to 102 (GSVAVGKS) contacts ATP.

This sequence belongs to the prokaryotic pantothenate kinase family.

It is found in the cytoplasm. It catalyses the reaction (R)-pantothenate + ATP = (R)-4'-phosphopantothenate + ADP + H(+). The protein operates within cofactor biosynthesis; coenzyme A biosynthesis; CoA from (R)-pantothenate: step 1/5. The chain is Pantothenate kinase from Yersinia enterocolitica serotype O:8 / biotype 1B (strain NCTC 13174 / 8081).